Reading from the N-terminus, the 300-residue chain is Phosphatidylserine decarboxylase proenzyme (300 aa).

Active-site charge relay system; for autoendoproteolytic cleavage activity residues include Asp113, His169, and Ser256. Residue Ser256 is the Schiff-base intermediate with substrate; via pyruvic acid; for decarboxylase activity of the active site. Ser256 carries the pyruvic acid (Ser); by autocatalysis modification.

It belongs to the phosphatidylserine decarboxylase family. PSD-B subfamily. Prokaryotic type II sub-subfamily. As to quaternary structure, heterodimer of a large membrane-associated beta subunit and a small pyruvoyl-containing alpha subunit. Requires pyruvate as cofactor. In terms of processing, is synthesized initially as an inactive proenzyme. Formation of the active enzyme involves a self-maturation process in which the active site pyruvoyl group is generated from an internal serine residue via an autocatalytic post-translational modification. Two non-identical subunits are generated from the proenzyme in this reaction, and the pyruvate is formed at the N-terminus of the alpha chain, which is derived from the carboxyl end of the proenzyme. The autoendoproteolytic cleavage occurs by a canonical serine protease mechanism, in which the side chain hydroxyl group of the serine supplies its oxygen atom to form the C-terminus of the beta chain, while the remainder of the serine residue undergoes an oxidative deamination to produce ammonia and the pyruvoyl prosthetic group on the alpha chain. During this reaction, the Ser that is part of the protease active site of the proenzyme becomes the pyruvoyl prosthetic group, which constitutes an essential element of the active site of the mature decarboxylase.

The protein localises to the cell membrane. It carries out the reaction a 1,2-diacyl-sn-glycero-3-phospho-L-serine + H(+) = a 1,2-diacyl-sn-glycero-3-phosphoethanolamine + CO2. It functions in the pathway phospholipid metabolism; phosphatidylethanolamine biosynthesis; phosphatidylethanolamine from CDP-diacylglycerol: step 2/2. Catalyzes the formation of phosphatidylethanolamine (PtdEtn) from phosphatidylserine (PtdSer). The chain is Phosphatidylserine decarboxylase proenzyme from Ruminiclostridium cellulolyticum (strain ATCC 35319 / DSM 5812 / JCM 6584 / H10) (Clostridium cellulolyticum).